We begin with the raw amino-acid sequence, 322 residues long: Transcription factor IIIA (322 aa).

9 consecutive C2H2-type zinc fingers follow at residues 12-36 (FVCS…YCKH), 42-64 (FACD…NLSH), 70-95 (YQCL…ERVH), 102-126 (YVCD…KCEH), 132-156 (FECQ…EKVH), 159-184 (YPCA…KAAH), 188-211 (LQCD…LFVH), 218-243 (FKCT…LSFH), and 249-273 (FICP…AVVH). Residues 272–322 (VHDPQKKKLQKKTKRGRKKKLEPKTNVSDDSELPAQLHGLSLNTSTSQNNP) form a disordered region. Residues 278 to 292 (KKLQKKTKRGRKKKL) show a composition bias toward basic residues. Positions 312 to 322 (SLNTSTSQNNP) are enriched in polar residues.

It is found in the nucleus. Functionally, involved in ribosomal large subunit biogenesis. Interacts with the internal control region (ICR) of approximately 50 bases within the 5S RNA genes, is required for correct transcription of these genes by RNA polymerase III. Also binds the transcribed 5S RNA's. The chain is Transcription factor IIIA (gtf3a) from Ictalurus punctatus (Channel catfish).